A 213-amino-acid polypeptide reads, in one-letter code: Thiamine-phosphate synthase (213 aa).

Residues 43–47 (QLRDK) and asparagine 74 contribute to the 4-amino-2-methyl-5-(diphosphooxymethyl)pyrimidine site. Residues aspartate 75 and aspartate 94 each contribute to the Mg(2+) site. Serine 113 lines the 4-amino-2-methyl-5-(diphosphooxymethyl)pyrimidine pocket. 142–144 (TAT) contributes to the 2-[(2R,5Z)-2-carboxy-4-methylthiazol-5(2H)-ylidene]ethyl phosphate binding site. Lysine 145 serves as a coordination point for 4-amino-2-methyl-5-(diphosphooxymethyl)pyrimidine. Residues glycine 173 and 193 to 194 (VS) each bind 2-[(2R,5Z)-2-carboxy-4-methylthiazol-5(2H)-ylidene]ethyl phosphate.

The protein belongs to the thiamine-phosphate synthase family. It depends on Mg(2+) as a cofactor.

It catalyses the reaction 2-[(2R,5Z)-2-carboxy-4-methylthiazol-5(2H)-ylidene]ethyl phosphate + 4-amino-2-methyl-5-(diphosphooxymethyl)pyrimidine + 2 H(+) = thiamine phosphate + CO2 + diphosphate. The catalysed reaction is 2-(2-carboxy-4-methylthiazol-5-yl)ethyl phosphate + 4-amino-2-methyl-5-(diphosphooxymethyl)pyrimidine + 2 H(+) = thiamine phosphate + CO2 + diphosphate. The enzyme catalyses 4-methyl-5-(2-phosphooxyethyl)-thiazole + 4-amino-2-methyl-5-(diphosphooxymethyl)pyrimidine + H(+) = thiamine phosphate + diphosphate. Its pathway is cofactor biosynthesis; thiamine diphosphate biosynthesis; thiamine phosphate from 4-amino-2-methyl-5-diphosphomethylpyrimidine and 4-methyl-5-(2-phosphoethyl)-thiazole: step 1/1. Functionally, condenses 4-methyl-5-(beta-hydroxyethyl)thiazole monophosphate (THZ-P) and 2-methyl-4-amino-5-hydroxymethyl pyrimidine pyrophosphate (HMP-PP) to form thiamine monophosphate (TMP). This Psychrobacter sp. (strain PRwf-1) protein is Thiamine-phosphate synthase.